A 452-amino-acid chain; its full sequence is Cytochrome b-c1 complex subunit 2, mitochondrial (452 aa).

A mitochondrion-targeting transit peptide spans 1–14 (MKLLSRAGSFSRFY). 3 positions are modified to N6-acetyllysine: lysine 65, lysine 198, and lysine 249. The residue at position 367 (serine 367) is a Phosphoserine.

It belongs to the peptidase M16 family. UQCRC2/QCR2 subfamily. In terms of assembly, component of the ubiquinol-cytochrome c oxidoreductase (cytochrome b-c1 complex, complex III, CIII), a multisubunit enzyme composed of 11 subunits. The complex is composed of 3 respiratory subunits cytochrome b, cytochrome c1 and Rieske protein UQCRFS1, 2 core protein subunits UQCRC1/QCR1 and UQCRC2/QCR2, and 6 low-molecular weight protein subunits UQCRH/QCR6, UQCRB/QCR7, UQCRQ/QCR8, UQCR10/QCR9, UQCR11/QCR10 and subunit 9, the cleavage product of Rieske protein UQCRFS1. The complex exists as an obligatory dimer and forms supercomplexes (SCs) in the inner mitochondrial membrane with NADH-ubiquinone oxidoreductase (complex I, CI) and cytochrome c oxidase (complex IV, CIV), resulting in different assemblies (supercomplex SCI(1)III(2)IV(1) and megacomplex MCI(2)III(2)IV(2)). Interacts with RAB5IF. Interacts with STMP1. Expressed in the head region and flagellum of epididymal sperm.

The protein resides in the mitochondrion inner membrane. Functionally, component of the ubiquinol-cytochrome c oxidoreductase, a multisubunit transmembrane complex that is part of the mitochondrial electron transport chain which drives oxidative phosphorylation. The respiratory chain contains 3 multisubunit complexes succinate dehydrogenase (complex II, CII), ubiquinol-cytochrome c oxidoreductase (cytochrome b-c1 complex, complex III, CIII) and cytochrome c oxidase (complex IV, CIV), that cooperate to transfer electrons derived from NADH and succinate to molecular oxygen, creating an electrochemical gradient over the inner membrane that drives transmembrane transport and the ATP synthase. The cytochrome b-c1 complex catalyzes electron transfer from ubiquinol to cytochrome c, linking this redox reaction to translocation of protons across the mitochondrial inner membrane, with protons being carried across the membrane as hydrogens on the quinol. In the process called Q cycle, 2 protons are consumed from the matrix, 4 protons are released into the intermembrane space and 2 electrons are passed to cytochrome c. The 2 core subunits UQCRC1/QCR1 and UQCRC2/QCR2 are homologous to the 2 mitochondrial-processing peptidase (MPP) subunits beta-MPP and alpha-MPP respectively, and they seem to have preserved their MPP processing properties. May be involved in the in situ processing of UQCRFS1 into the mature Rieske protein and its mitochondrial targeting sequence (MTS)/subunit 9 when incorporated into complex III. In Rattus norvegicus (Rat), this protein is Cytochrome b-c1 complex subunit 2, mitochondrial (Uqcrc2).